The sequence spans 255 residues: Flagellar L-ring protein (255 aa).

An N-terminal signal peptide occupies residues 1–25 (MRRHSTRKTVARVAVVALAVGVLAG). Cys-26 carries the N-palmitoyl cysteine lipid modification. The S-diacylglycerol cysteine moiety is linked to residue Cys-26.

It belongs to the FlgH family. The basal body constitutes a major portion of the flagellar organelle and consists of four rings (L,P,S, and M) mounted on a central rod.

Its subcellular location is the cell outer membrane. The protein localises to the bacterial flagellum basal body. Its function is as follows. Assembles around the rod to form the L-ring and probably protects the motor/basal body from shearing forces during rotation. This is Flagellar L-ring protein from Rhodospirillum rubrum (strain ATCC 11170 / ATH 1.1.1 / DSM 467 / LMG 4362 / NCIMB 8255 / S1).